Consider the following 256-residue polypeptide: 5-oxoprolinase subunit A 3 (256 aa).

Belongs to the LamB/PxpA family. Forms a complex composed of PxpA, PxpB and PxpC.

It carries out the reaction 5-oxo-L-proline + ATP + 2 H2O = L-glutamate + ADP + phosphate + H(+). Catalyzes the cleavage of 5-oxoproline to form L-glutamate coupled to the hydrolysis of ATP to ADP and inorganic phosphate. This chain is 5-oxoprolinase subunit A 3, found in Pseudomonas syringae pv. tomato (strain ATCC BAA-871 / DC3000).